We begin with the raw amino-acid sequence, 336 residues long: Ketol-acid reductoisomerase (NADP(+)) (336 aa).

Residues 2-181 enclose the KARI N-terminal Rossmann domain; the sequence is AKVYYEKDVM…GATRAGVLET (180 aa). Residues 25–28, arginine 48, serine 52, and 82–85 contribute to the NADP(+) site; these read YGSQ and DELQ. The active site involves histidine 107. Glycine 133 provides a ligand contact to NADP(+). The 146-residue stretch at 182 to 327 folds into the KARI C-terminal knotted domain; it reads TFKEETETDL…RQLREMMPFV (146 aa). Aspartate 190, glutamate 194, glutamate 226, and glutamate 230 together coordinate Mg(2+). Serine 251 contacts substrate.

This sequence belongs to the ketol-acid reductoisomerase family. Requires Mg(2+) as cofactor.

The catalysed reaction is (2R)-2,3-dihydroxy-3-methylbutanoate + NADP(+) = (2S)-2-acetolactate + NADPH + H(+). It catalyses the reaction (2R,3R)-2,3-dihydroxy-3-methylpentanoate + NADP(+) = (S)-2-ethyl-2-hydroxy-3-oxobutanoate + NADPH + H(+). It functions in the pathway amino-acid biosynthesis; L-isoleucine biosynthesis; L-isoleucine from 2-oxobutanoate: step 2/4. The protein operates within amino-acid biosynthesis; L-valine biosynthesis; L-valine from pyruvate: step 2/4. Functionally, involved in the biosynthesis of branched-chain amino acids (BCAA). Catalyzes an alkyl-migration followed by a ketol-acid reduction of (S)-2-acetolactate (S2AL) to yield (R)-2,3-dihydroxy-isovalerate. In the isomerase reaction, S2AL is rearranged via a Mg-dependent methyl migration to produce 3-hydroxy-3-methyl-2-ketobutyrate (HMKB). In the reductase reaction, this 2-ketoacid undergoes a metal-dependent reduction by NADPH to yield (R)-2,3-dihydroxy-isovalerate. This chain is Ketol-acid reductoisomerase (NADP(+)), found in Bacillus cytotoxicus (strain DSM 22905 / CIP 110041 / 391-98 / NVH 391-98).